Consider the following 91-residue polypeptide: Progonadoliberin-1 (91 aa).

Positions 1-23 (MEPIPKLLAGLLLLTLCVVGCSS) are cleaved as a signal peptide. The residue at position 24 (Gln-24) is a Pyrrolidone carboxylic acid. Gly-33 carries the glycine amide modification.

Belongs to the GnRH family. Post-translationally, the precursor is cleaved by ACE, which removes the Gly-Lys-Arg peptide at the C-terminus, leading to mature hormone. The mature form of Gonadoliberin-1 is also cleaved and degraded by ACE.

It is found in the secreted. Stimulates the secretion of gonadotropins; it stimulates the secretion of both luteinizing and follicle-stimulating hormones. In Sus scrofa (Pig), this protein is Progonadoliberin-1 (GNRH1).